A 364-amino-acid chain; its full sequence is Chorismate synthase (364 aa).

Arg48 and Arg54 together coordinate NADP(+). FMN is bound by residues 125-127 (RSS), Gly282, 297-301 (KPPAS), and Arg323.

Belongs to the chorismate synthase family. In terms of assembly, homotetramer. FMNH2 is required as a cofactor.

The enzyme catalyses 5-O-(1-carboxyvinyl)-3-phosphoshikimate = chorismate + phosphate. The protein operates within metabolic intermediate biosynthesis; chorismate biosynthesis; chorismate from D-erythrose 4-phosphate and phosphoenolpyruvate: step 7/7. Its function is as follows. Catalyzes the anti-1,4-elimination of the C-3 phosphate and the C-6 proR hydrogen from 5-enolpyruvylshikimate-3-phosphate (EPSP) to yield chorismate, which is the branch point compound that serves as the starting substrate for the three terminal pathways of aromatic amino acid biosynthesis. This reaction introduces a second double bond into the aromatic ring system. This chain is Chorismate synthase, found in Chloroflexus aggregans (strain MD-66 / DSM 9485).